A 91-amino-acid chain; its full sequence is UPF0358 protein SAS1047 (91 aa).

This sequence belongs to the UPF0358 family.

The sequence is that of UPF0358 protein SAS1047 from Staphylococcus aureus (strain MSSA476).